The sequence spans 433 residues: D-amino acid dehydrogenase (433 aa).

3–17 (VLVLGSGVIGTTSAY) is an FAD binding site.

The protein belongs to the DadA oxidoreductase family. FAD is required as a cofactor.

The enzyme catalyses a D-alpha-amino acid + A + H2O = a 2-oxocarboxylate + AH2 + NH4(+). Its pathway is amino-acid degradation; D-alanine degradation; NH(3) and pyruvate from D-alanine: step 1/1. In terms of biological role, oxidative deamination of D-amino acids. The protein is D-amino acid dehydrogenase of Pseudomonas syringae pv. syringae (strain B728a).